A 106-amino-acid polypeptide reads, in one-letter code: Foxo1-corepressor (106 aa).

A disordered region spans residues Met-1–Asp-44. The Nuclear export signal motif lies at Ile-78–Leu-87. The residue at position 93 (Thr-93) is a Phosphothreonine; by PKA.

In terms of assembly, interacts with FOXO1 (via N-terminal domain); the interaction is direct, occurs in a forskolin-independent manner that prevents SIRT1 binding to FOXO1. Interacts with FOXO3. Does not interact with FOXO4. In terms of processing, phosphorylated at Thr-93 by PKA, leading to import into the nucleus. In terms of tissue distribution, expressed in adipocytes. Expressed in brown and white adipose tissue but not in liver. Protein levels in brown and white adipose tissues decrease following fasting (at protein level). Expressed in white and brown adipose tissues. Expressed in adipocytes. Not expressed in liver, skeletal muscle and brain.

It localises to the cytoplasm. Its subcellular location is the cytosol. It is found in the nucleus. Functionally, regulator of adipocytes that acts by repressing FOXO1 transcriptional activity. Acts by promoting acetylation of FOXO1, both by preventing the interaction between FOXO1 and SIRT1 deacetylase, and by mediating acetyltransferase activity in vitro. Regulates insulin sensitivity and energy metabolism. The polypeptide is Foxo1-corepressor (Fcor) (Mus musculus (Mouse)).